A 504-amino-acid chain; its full sequence is Probable cytosol aminopeptidase (504 aa).

Mn(2+) contacts are provided by Lys274 and Asp279. Residue Lys286 is part of the active site. Positions 297, 356, and 358 each coordinate Mn(2+). The active site involves Arg360.

The protein belongs to the peptidase M17 family. Requires Mn(2+) as cofactor.

The protein localises to the cytoplasm. It catalyses the reaction Release of an N-terminal amino acid, Xaa-|-Yaa-, in which Xaa is preferably Leu, but may be other amino acids including Pro although not Arg or Lys, and Yaa may be Pro. Amino acid amides and methyl esters are also readily hydrolyzed, but rates on arylamides are exceedingly low.. The enzyme catalyses Release of an N-terminal amino acid, preferentially leucine, but not glutamic or aspartic acids.. Its function is as follows. Presumably involved in the processing and regular turnover of intracellular proteins. Catalyzes the removal of unsubstituted N-terminal amino acids from various peptides. This Gloeobacter violaceus (strain ATCC 29082 / PCC 7421) protein is Probable cytosol aminopeptidase.